Here is a 316-residue protein sequence, read N- to C-terminus: L-lactate dehydrogenase (316 aa).

NAD(+) contacts are provided by residues V15, D37, K42, Y68, and 82–83 (GL). Residues Q85, R91, and 123–126 (NPVD) contribute to the substrate site. Residues 121–123 (ASN) and T146 contribute to the NAD(+) site. Position 151–154 (151–154 (DTSR)) interacts with substrate. Beta-D-fructose 1,6-bisphosphate-binding residues include R156 and H171. H178 (proton acceptor) is an active-site residue. Y222 bears the Phosphotyrosine mark. T231 contacts substrate.

This sequence belongs to the LDH/MDH superfamily. LDH family. In terms of assembly, homotetramer.

The protein localises to the cytoplasm. The catalysed reaction is (S)-lactate + NAD(+) = pyruvate + NADH + H(+). Its pathway is fermentation; pyruvate fermentation to lactate; (S)-lactate from pyruvate: step 1/1. Its activity is regulated as follows. Allosterically activated by fructose 1,6-bisphosphate (FBP). Catalyzes the conversion of lactate to pyruvate. This is L-lactate dehydrogenase from Borrelia garinii subsp. bavariensis (strain ATCC BAA-2496 / DSM 23469 / PBi) (Borreliella bavariensis).